The chain runs to 308 residues: Protein Bel-1 (308 aa).

The DNA-binding element occupies 94–203; the sequence is SKSTCKRLIL…KGTRLPKRRC (110 aa). Residues 200 to 242 are disordered; that stretch reads KRRCNPSRRYETFREHPPTRKRRSKEGIPTDQQPSTSNGDPMA. Basic and acidic residues predominate over residues 207-217; sequence RRYETFREHPP. A Nuclear localization signal motif is present at residues 217–226; it reads PTRKRRSKEG. Positions 228–304 are transactivation domain; that stretch reads PTDQQPSTSN…PLGSSEDQLL (77 aa). Polar residues predominate over residues 229–238; the sequence is TDQQPSTSNG.

Homodimer or homomultimer. Forms complexes with the host nuclear factors NFIA, NFIB, NFIC or NFIX.

It localises to the host nucleus. Functionally, transcriptional transactivator that activates the viral internal promoter (IP), thereby enhancing its own expression. This transactivation is repressed by nuclear factor I. Also transactivates the long terminal repeat (LTR) promoter, thereby inducing structural gene expression, initiating the late phase of infection. It is therefore a key regulator of viral gene expression. It directly binds to and activates DNA target sites of viral promoters and those of distinct cellular genes. Required for viral replication. This chain is Protein Bel-1 (bel1), found in Simian foamy virus type 1 (SFVmac).